The primary structure comprises 440 residues: Argininosuccinate lyase (440 aa).

The protein belongs to the lyase 1 family. Argininosuccinate lyase subfamily.

It localises to the cytoplasm. It catalyses the reaction 2-(N(omega)-L-arginino)succinate = fumarate + L-arginine. Its pathway is amino-acid biosynthesis; L-arginine biosynthesis; L-arginine from L-ornithine and carbamoyl phosphate: step 3/3. The protein is Argininosuccinate lyase of Clostridium botulinum (strain Langeland / NCTC 10281 / Type F).